A 62-amino-acid polypeptide reads, in one-letter code: Translational regulator CsrA (62 aa).

This sequence belongs to the CsrA/RsmA family. In terms of assembly, homodimer; the beta-strands of each monomer intercalate to form a hydrophobic core, while the alpha-helices form wings that extend away from the core.

The protein resides in the cytoplasm. A key translational regulator that binds mRNA to regulate translation initiation and/or mRNA stability. Mediates global changes in gene expression, shifting from rapid growth to stress survival by linking envelope stress, the stringent response and the catabolite repression systems. Usually binds in the 5'-UTR; binding at or near the Shine-Dalgarno sequence prevents ribosome-binding, repressing translation, binding elsewhere in the 5'-UTR can activate translation and/or stabilize the mRNA. Its function is antagonized by small RNA(s). This is Translational regulator CsrA from Idiomarina loihiensis (strain ATCC BAA-735 / DSM 15497 / L2-TR).